A 659-amino-acid chain; its full sequence is RNA-binding protein MIP6 (659 aa).

Residues 1-27 (MPNSHGNVLNNISLNSKQNPRSISKSC) are compositionally biased toward polar residues. A disordered region spans residues 1–35 (MPNSHGNVLNNISLNSKQNPRSISKSCPNDKDARQ). RRM domains are found at residues 111-189 (NSLF…PSMK), 199-267 (TNVF…GNKI), and 313-389 (KTIL…PGKD).

Interacts with MEX67.

The protein localises to the cytoplasm. This chain is RNA-binding protein MIP6 (MIP6), found in Saccharomyces cerevisiae (strain ATCC 204508 / S288c) (Baker's yeast).